Consider the following 34-residue polypeptide: COP9 signalosome complex subunit 5a (34 aa).

This sequence belongs to the peptidase M67A family. CSN5 subfamily. Component of the CSN complex, probably composed of CSN1, CSN2, CSN3, CSN4, CSN5 (CSN5A or CSN5B), CSN6 (CSN6A or CSN6B), CSN7 and CSN8. It depends on a divalent metal cation as a cofactor.

It localises to the cytoplasm. Its subcellular location is the nucleus. Its function is as follows. Probable protease subunit of the COP9 signalosome complex (CSN), a complex involved in various cellular and developmental processes such as photomorphogenesis and auxin and jasmonate responses. The CSN complex is an essential regulator of the ubiquitin (Ubl) conjugation pathway by mediating the deneddylation of the cullin subunits of the SCF-type E3 ligase complexes, leading to decrease the Ubl ligase activity of SCF. In the complex, it probably acts as the catalytic center that mediates the cleavage of Nedd8 from cullins. It however has no metalloprotease activity by itself and requires the other subunits of the CSN complex. The CSN complex is involved in repression of photomorphogenesis in darkness by regulating the activity of COP1-containing Ubl ligase complexes. The chain is COP9 signalosome complex subunit 5a (CSN5A) from Brassica oleracea (Wild cabbage).